The sequence spans 169 residues: Peptide deformylase (169 aa).

Positions 91 and 133 each coordinate Fe cation. Residue E134 is part of the active site. H137 lines the Fe cation pocket.

The protein belongs to the polypeptide deformylase family. Requires Fe(2+) as cofactor.

The catalysed reaction is N-terminal N-formyl-L-methionyl-[peptide] + H2O = N-terminal L-methionyl-[peptide] + formate. Removes the formyl group from the N-terminal Met of newly synthesized proteins. Requires at least a dipeptide for an efficient rate of reaction. N-terminal L-methionine is a prerequisite for activity but the enzyme has broad specificity at other positions. The protein is Peptide deformylase of Enterobacter sp. (strain 638).